The sequence spans 517 residues: Fatty acyl-CoA reductase wat (517 aa).

The next 2 membrane-spanning stretches (helical) occupy residues Ile-378–Ile-398 and Val-492–Leu-512.

The protein belongs to the fatty acyl-CoA reductase family.

The protein resides in the apical cell membrane. It carries out the reaction a long-chain fatty acyl-CoA + 2 NADPH + 2 H(+) = a long-chain primary fatty alcohol + 2 NADP(+) + CoA. Its function is as follows. Catalyzes the reduction of saturated fatty acyl-CoA to fatty alcohols. The preferred substrates are C24:0 and C26:0. Necessary for the final stages of tracheal maturation, to facilitate the transition from water-filled to gas-filled tubes. May help to maintain the integrity of the outer hydrophobic envelope of the trachea. This is Fatty acyl-CoA reductase wat from Drosophila melanogaster (Fruit fly).